A 579-amino-acid chain; its full sequence is Putative adenine deaminase OB0751 (579 aa).

It belongs to the metallo-dependent hydrolases superfamily. Adenine deaminase family.

It carries out the reaction adenine + H2O + H(+) = hypoxanthine + NH4(+). This is Putative adenine deaminase OB0751 from Oceanobacillus iheyensis (strain DSM 14371 / CIP 107618 / JCM 11309 / KCTC 3954 / HTE831).